Here is a 160-residue protein sequence, read N- to C-terminus: Cytochrome b6-f complex subunit 4 (160 aa).

The next 3 membrane-spanning stretches (helical) occupy residues 36–56, 95–115, and 128–148; these read LLYI…GLAV, LLGI…PFIE, and IAMS…IGAC.

The protein belongs to the cytochrome b family. PetD subfamily. The 4 large subunits of the cytochrome b6-f complex are cytochrome b6, subunit IV (17 kDa polypeptide, PetD), cytochrome f and the Rieske protein, while the 4 small subunits are PetG, PetL, PetM and PetN. The complex functions as a dimer.

It localises to the cellular thylakoid membrane. Component of the cytochrome b6-f complex, which mediates electron transfer between photosystem II (PSII) and photosystem I (PSI), cyclic electron flow around PSI, and state transitions. The protein is Cytochrome b6-f complex subunit 4 of Prochlorococcus marinus (strain MIT 9301).